Reading from the N-terminus, the 582-residue chain is Heterogeneous nuclear ribonucleoprotein C homolog (582 aa).

Positions 1 to 21 (MSEALETGDPSPPPPIVSENG) are disordered. 3 consecutive C2H2-type zinc fingers follow at residues 102 to 125 (YYCCLCNRPYKTHATLTAHLRGYH), 130 to 154 (SSCDEPGCNFLSFTDQEKKRHRRTH), and 213 to 235 (YACLKCPHSVFNAYHAARHVEMH).

Its subcellular location is the nucleus. This is Heterogeneous nuclear ribonucleoprotein C homolog from Caenorhabditis elegans.